The primary structure comprises 979 residues: Putative disease resistance protein RGA1 (979 aa).

One can recognise an NB-ARC domain in the interval 143–437 (GSVLTEPQVY…MAHGFLLSKG (295 aa)). Residue 182–189 (GMGGLGKT) coordinates ATP. LRR repeat units lie at residues 524-547 (FVSL…IGDL), 549-570 (HLRY…RLCK), 571-594 (LQNL…QTSK), 595-619 (LGSL…GLLT), 637-661 (LGEL…KKDT), 748-773 (LPCL…VHPG), 823-841 (VKTL…SISN), 842-866 (LRAL…MFKS), 868-890 (ANLK…SLAS), 891-915 (LNAL…GVKG), 917-939 (TSLT…GLQH), and 940-965 (LTAL…IGED).

The protein belongs to the disease resistance NB-LRR family.

Its function is as follows. Disease resistance protein. Resistance proteins guard the plant against pathogens that contain an appropriate avirulence protein via a direct or indirect interaction with this avirulence protein. That triggers a defense system which restricts the pathogen growth. This is Putative disease resistance protein RGA1 (RGA1) from Solanum bulbocastanum (Wild potato).